Consider the following 303-residue polypeptide: MYIQVLGSAAGGGFPQWNCNCVNCKGYRDGTLRATARTQSSIALSDDGVHWVLCNASPDIRAQLQAFAPMQPARALRDTGINAIVLLDSQIDHTTGLLSLREGCPHQVWCTDMVHQDLTTGFPLFNMLSHWNGGLQWNRIELEGSFVIEACPNLKFTPFPLRSAAPPYSPHRFDPHPGDNLGLLVEDTRTGGKLFYAPGLGQVDGKLLAMMHDADCLLVDGTLWEDDEMQRRGVGTRTGREMGHLAQNGPGGMLEVLDGFSRQRKVLIHINNTNPILDEDSPERAEVLRRGVEVAFDGMSIEL.

It belongs to the PqqB family.

The protein operates within cofactor biosynthesis; pyrroloquinoline quinone biosynthesis. Functionally, may be involved in the transport of PQQ or its precursor to the periplasm. The protein is Coenzyme PQQ synthesis protein B of Pseudomonas putida (strain GB-1).